The sequence spans 146 residues: Aminoglycoside N(6')-acetyltransferase type 1 (146 aa).

In terms of domain architecture, N-acetyltransferase spans 1–146 (MNIMPVSESL…RVVYFKKHIG (146 aa)). Residues W22, H25, Y66, and E79 each contribute to the substrate site. Position 81–83 (81–83 (IYV)) interacts with acetyl-CoA. D115 contacts substrate. Position 120 (N120) interacts with acetyl-CoA. E136 provides a ligand contact to substrate.

Homodimer.

The enzyme catalyses kanamycin B + acetyl-CoA = N(6')-acetylkanamycin B + CoA + H(+). Its function is as follows. Catalyzes the transfer of an acetyl group from acetyl-CoA to the 6'-amino group of aminoglycoside molecules conferring resistance to antibiotics containing the purpurosamine ring including amikacin, kanamycin, tobramycin and netilmicin. This is Aminoglycoside N(6')-acetyltransferase type 1 from Acinetobacter genomosp. 13.